A 546-amino-acid polypeptide reads, in one-letter code: Glucose-6-phosphate isomerase (546 aa).

The active-site Proton donor is glutamate 355. Catalysis depends on residues histidine 386 and lysine 510.

This sequence belongs to the GPI family.

It localises to the cytoplasm. It catalyses the reaction alpha-D-glucose 6-phosphate = beta-D-fructose 6-phosphate. It functions in the pathway carbohydrate biosynthesis; gluconeogenesis. The protein operates within carbohydrate degradation; glycolysis; D-glyceraldehyde 3-phosphate and glycerone phosphate from D-glucose: step 2/4. Its function is as follows. Catalyzes the reversible isomerization of glucose-6-phosphate to fructose-6-phosphate. The sequence is that of Glucose-6-phosphate isomerase from Buchnera aphidicola subsp. Cinara cedri (strain Cc).